The following is a 309-amino-acid chain: Ribose-phosphate pyrophosphokinase (309 aa).

ATP-binding positions include D42–E44 and R102–Q103. The Mg(2+) site is built by H136 and D175. Residue K199 is part of the active site. Residues R201, D226, and S230–T234 contribute to the D-ribose 5-phosphate site.

This sequence belongs to the ribose-phosphate pyrophosphokinase family. Class III (archaeal) subfamily. The cofactor is Mg(2+).

It is found in the cytoplasm. It catalyses the reaction D-ribose 5-phosphate + ATP = 5-phospho-alpha-D-ribose 1-diphosphate + AMP + H(+). It functions in the pathway metabolic intermediate biosynthesis; 5-phospho-alpha-D-ribose 1-diphosphate biosynthesis; 5-phospho-alpha-D-ribose 1-diphosphate from D-ribose 5-phosphate (route I): step 1/1. Functionally, involved in the biosynthesis of the central metabolite phospho-alpha-D-ribosyl-1-pyrophosphate (PRPP) via the transfer of pyrophosphoryl group from ATP to 1-hydroxyl of ribose-5-phosphate (Rib-5-P). The protein is Ribose-phosphate pyrophosphokinase of Aeropyrum pernix (strain ATCC 700893 / DSM 11879 / JCM 9820 / NBRC 100138 / K1).